The chain runs to 146 residues: Ribonuclease H (146 aa).

The RNase H type-1 domain occupies 1 to 143 (MQKKIIVYTD…CDELARQAIK (143 aa)). Residues D10, E48, D70, and D135 each contribute to the Mg(2+) site.

This sequence belongs to the RNase H family. Monomer. Mg(2+) serves as cofactor.

The protein localises to the cytoplasm. It carries out the reaction Endonucleolytic cleavage to 5'-phosphomonoester.. Its function is as follows. Endonuclease that specifically degrades the RNA of RNA-DNA hybrids. The polypeptide is Ribonuclease H (Chlorobium phaeobacteroides (strain DSM 266 / SMG 266 / 2430)).